A 248-amino-acid chain; its full sequence is MNGDNRPVEDAHYTETGFPYAATGSYMDFYGGAAQGPLNYDHAATMHPQDNLYWTMNTNAYKFGFSGSDNASFYGSYDMNDHLSRMSIGRTNWDYHPMVNVADDPENTVARSVQIGDTDEHSEAEECIANEHDPDSPQVSWQDDIDPDTMTYEELVELGEAVGTESRGLSQELIETLPTKKYKFGSIFSRKRAGERCVICQLKYKIGERQMNLPCKHVYHSECISKWLSINKVCPVCNSEVFGEPSIH.

The RING-type; atypical zinc finger occupies 197–238; it reads CVICQLKYKIGERQMNLPCKHVYHSECISKWLSINKVCPVCN.

In terms of assembly, interacts with the E2 ubiquitin conjugating enzyme UBC10 via the RING domain. Interacts with DA1. In terms of processing, auto-ubiquitinated. Mostly expressed in inflorescence, and, to a lower extent, in seedlings, roots, stems, leaves and siliques.

The enzyme catalyses S-ubiquitinyl-[E2 ubiquitin-conjugating enzyme]-L-cysteine + [acceptor protein]-L-lysine = [E2 ubiquitin-conjugating enzyme]-L-cysteine + N(6)-ubiquitinyl-[acceptor protein]-L-lysine.. It functions in the pathway protein modification; protein ubiquitination. Functionally, E3 ubiquitin-protein ligase that limits organ size, and possibly seed size, in a dose-dependent manner. Negatively regulates the duration of cell proliferation in leaves and petals independently of the major phytohormones (e.g. auxin, cytokinin, gibberellin, brassinosteroids, ethylene, abscisic acid, jasmonic acid), probably by targeting growth stimulators for degradation. Limits the proliferation of root meristematic cells. Polyubiquitinates DA1. Involved in the promotion of leaf senescence, in addition to its function in restricting plant growth. Possesses E3 ubiquitin-protein ligase activity in vitro. In Arabidopsis thaliana (Mouse-ear cress), this protein is E3 ubiquitin-protein ligase BIG BROTHER (BB).